A 432-amino-acid chain; its full sequence is Serine--tRNA ligase (432 aa).

235 to 237 provides a ligand contact to L-serine; it reads TSE. 266–268 lines the ATP pocket; it reads RSE. Residue Glu-289 participates in L-serine binding. Position 353–356 (353–356) interacts with ATP; sequence EISS. Ser-388 is a binding site for L-serine.

Belongs to the class-II aminoacyl-tRNA synthetase family. Type-1 seryl-tRNA synthetase subfamily. In terms of assembly, homodimer. The tRNA molecule binds across the dimer.

It localises to the cytoplasm. It catalyses the reaction tRNA(Ser) + L-serine + ATP = L-seryl-tRNA(Ser) + AMP + diphosphate + H(+). It carries out the reaction tRNA(Sec) + L-serine + ATP = L-seryl-tRNA(Sec) + AMP + diphosphate + H(+). It participates in aminoacyl-tRNA biosynthesis; selenocysteinyl-tRNA(Sec) biosynthesis; L-seryl-tRNA(Sec) from L-serine and tRNA(Sec): step 1/1. In terms of biological role, catalyzes the attachment of serine to tRNA(Ser). Is also able to aminoacylate tRNA(Sec) with serine, to form the misacylated tRNA L-seryl-tRNA(Sec), which will be further converted into selenocysteinyl-tRNA(Sec). The protein is Serine--tRNA ligase of Paraburkholderia phymatum (strain DSM 17167 / CIP 108236 / LMG 21445 / STM815) (Burkholderia phymatum).